A 210-amino-acid chain; its full sequence is MGAAKASLGRIFPESSILFLCDMQEKLRDRILYFPQIVSKAARMLKVAQMLEIPVLLTEHYPQGLGPTVPELGAQGLRTMSKTSFSMVPPLQQELDKLPQLQSVLLCGIETQGCILHTALDLLDRGLQVHVAVDACSSQSEMNRLVALARMQQSGVFLSTSEVLILQLVKDAAHPQFKEIQKILKEPVTDIGLLGFFQGKKNSLLPNSRT.

Lysine 178 carries the post-translational modification N6-succinyllysine.

This sequence belongs to the isochorismatase family. In terms of assembly, interacts with CDKN2A. Ubiquitous. Expressed predominantly in uterus, stomach and urinary tract.

Its subcellular location is the cytoplasm. It is found in the nucleus. This Mus musculus (Mouse) protein is Isochorismatase domain-containing protein 2B (Isoc2b).